Consider the following 159-residue polypeptide: Large ribosomal subunit protein uL10 (159 aa).

Belongs to the universal ribosomal protein uL10 family. Part of the ribosomal stalk of the 50S ribosomal subunit. The N-terminus interacts with L11 and the large rRNA to form the base of the stalk. The C-terminus forms an elongated spine to which L12 dimers bind in a sequential fashion forming a multimeric L10(L12)X complex.

In terms of biological role, forms part of the ribosomal stalk, playing a central role in the interaction of the ribosome with GTP-bound translation factors. This Sulfurimonas denitrificans (strain ATCC 33889 / DSM 1251) (Thiomicrospira denitrificans (strain ATCC 33889 / DSM 1251)) protein is Large ribosomal subunit protein uL10.